Consider the following 461-residue polypeptide: V-type ATP synthase beta chain (461 aa).

The protein belongs to the ATPase alpha/beta chains family.

Functionally, produces ATP from ADP in the presence of a proton gradient across the membrane. The V-type beta chain is a regulatory subunit. This Clostridium botulinum (strain ATCC 19397 / Type A) protein is V-type ATP synthase beta chain.